Reading from the N-terminus, the 189-residue chain is Peptidyl-tRNA hydrolase (189 aa).

A tRNA-binding site is contributed by Tyr-15. His-20 acts as the Proton acceptor in catalysis. Residues Phe-66, Asn-68, and Asn-114 each contribute to the tRNA site.

This sequence belongs to the PTH family. As to quaternary structure, monomer.

The protein resides in the cytoplasm. It carries out the reaction an N-acyl-L-alpha-aminoacyl-tRNA + H2O = an N-acyl-L-amino acid + a tRNA + H(+). Its function is as follows. Hydrolyzes ribosome-free peptidyl-tRNAs (with 1 or more amino acids incorporated), which drop off the ribosome during protein synthesis, or as a result of ribosome stalling. Catalyzes the release of premature peptidyl moieties from peptidyl-tRNA molecules trapped in stalled 50S ribosomal subunits, and thus maintains levels of free tRNAs and 50S ribosomes. The polypeptide is Peptidyl-tRNA hydrolase (Streptococcus pneumoniae (strain P1031)).